Consider the following 27-residue polypeptide: Antimicrobial peptide 1 (27 aa).

As to expression, expressed by the skin glands.

It is found in the secreted. Functionally, has very weak antimicrobial activity against Gram-positive bacterium S.aureus and Gram-negative bacterium E.coli and stronger activity against yeast C.albicans. Enhances the antibacterial activity of XT3. Has hemolytic activity against human red blood cells. This chain is Antimicrobial peptide 1, found in Xenopus tropicalis (Western clawed frog).